The chain runs to 228 residues: Glyceraldehyde 3-phosphate phosphatase (228 aa).

It belongs to the HAD-like hydrolase superfamily. The cofactor is Mg(2+).

In terms of biological role, catalyzes the dephosphorylation of D,L-glyceraldehyde 3-phosphate in vitro. In Methanocaldococcus jannaschii (strain ATCC 43067 / DSM 2661 / JAL-1 / JCM 10045 / NBRC 100440) (Methanococcus jannaschii), this protein is Glyceraldehyde 3-phosphate phosphatase.